We begin with the raw amino-acid sequence, 318 residues long: Endochitinase 3 (318 aa).

The N-terminal stretch at 1 to 18 is a signal peptide; the sequence is EFTIFSLLFSLLLLNASA. The 42-residue stretch at 19 to 60 folds into the Chitin-binding type-1 domain; it reads EQCGSQAGGALCAPGLCCSKFGWCGNTNDYCGPGNCQSQCPG. Cystine bridges form between Cys-21/Cys-36, Cys-30/Cys-42, Cys-35/Cys-49, Cys-54/Cys-58, Cys-89/Cys-152, Cys-164/Cys-172, and Cys-271/Cys-303. Catalysis depends on Glu-134, which acts as the Proton donor. Positions 312-318 are cleaved as a propeptide — removed in mature form, vacuolar targeting; that stretch reads GLLVDTV.

Belongs to the glycosyl hydrolase 19 family. Chitinase class I subfamily.

Its subcellular location is the vacuole. The enzyme catalyses Random endo-hydrolysis of N-acetyl-beta-D-glucosaminide (1-&gt;4)-beta-linkages in chitin and chitodextrins.. Defense against chitin-containing fungal pathogens. This is Endochitinase 3 (CHTB3) from Solanum tuberosum (Potato).